A 103-amino-acid polypeptide reads, in one-letter code: Flagellar hook-basal body complex protein FliE (103 aa).

It belongs to the FliE family.

It localises to the bacterial flagellum basal body. The sequence is that of Flagellar hook-basal body complex protein FliE from Erwinia tasmaniensis (strain DSM 17950 / CFBP 7177 / CIP 109463 / NCPPB 4357 / Et1/99).